The primary structure comprises 493 residues: tRNA(Ile)-lysidine synthase, chloroplastic (493 aa).

An ATP-binding site is contributed by 68 to 73 (SGGQDS).

Belongs to the tRNA(Ile)-lysidine synthase family.

It localises to the plastid. The protein resides in the chloroplast. It carries out the reaction cytidine(34) in tRNA(Ile2) + L-lysine + ATP = lysidine(34) in tRNA(Ile2) + AMP + diphosphate + H(+). Its function is as follows. Ligates lysine onto the cytidine present at position 34 of the AUA codon-specific tRNA(Ile) that contains the anticodon CAU, in an ATP-dependent manner. Cytidine is converted to lysidine, thus changing the amino acid specificity of the tRNA from methionine to isoleucine. The protein is tRNA(Ile)-lysidine synthase, chloroplastic of Staurastrum punctulatum (Green alga).